Consider the following 269-residue polypeptide: Formamidopyrimidine-DNA glycosylase (269 aa).

The Schiff-base intermediate with DNA role is filled by P2. Catalysis depends on E3, which acts as the Proton donor. K57 (proton donor; for beta-elimination activity) is an active-site residue. Residues H90, R109, and K150 each contribute to the DNA site. The segment at Q235–K269 adopts an FPG-type zinc-finger fold. R259 serves as the catalytic Proton donor; for delta-elimination activity.

It belongs to the FPG family. In terms of assembly, monomer. It depends on Zn(2+) as a cofactor.

The enzyme catalyses Hydrolysis of DNA containing ring-opened 7-methylguanine residues, releasing 2,6-diamino-4-hydroxy-5-(N-methyl)formamidopyrimidine.. The catalysed reaction is 2'-deoxyribonucleotide-(2'-deoxyribose 5'-phosphate)-2'-deoxyribonucleotide-DNA = a 3'-end 2'-deoxyribonucleotide-(2,3-dehydro-2,3-deoxyribose 5'-phosphate)-DNA + a 5'-end 5'-phospho-2'-deoxyribonucleoside-DNA + H(+). Its function is as follows. Involved in base excision repair of DNA damaged by oxidation or by mutagenic agents. Acts as a DNA glycosylase that recognizes and removes damaged bases. Has a preference for oxidized purines, such as 7,8-dihydro-8-oxoguanine (8-oxoG). Has AP (apurinic/apyrimidinic) lyase activity and introduces nicks in the DNA strand. Cleaves the DNA backbone by beta-delta elimination to generate a single-strand break at the site of the removed base with both 3'- and 5'-phosphates. This Shigella dysenteriae serotype 1 (strain Sd197) protein is Formamidopyrimidine-DNA glycosylase.